The primary structure comprises 386 residues: Glyceraldehyde-3-phosphate dehydrogenase, chloroplastic (386 aa).

A chloroplast-targeting transit peptide spans 1–45 (MAYFKAVAYLAALASAAAFNPGSSFVPRLNAPATQPKAAKMTGPT). NADP(+) is bound by residues 58–59 (RI) and arginine 125. Residues 197–199 (SCT), threonine 228, 257–258 (TG), and arginine 280 each bind D-glyceraldehyde 3-phosphate. Cysteine 198 (nucleophile) is an active-site residue. Asparagine 362 is an NADP(+) binding site.

Belongs to the glyceraldehyde-3-phosphate dehydrogenase family. In terms of assembly, homotetramer.

The protein localises to the plastid. Its subcellular location is the chloroplast. It carries out the reaction D-glyceraldehyde 3-phosphate + phosphate + NADP(+) = (2R)-3-phospho-glyceroyl phosphate + NADPH + H(+). The enzyme catalyses D-glyceraldehyde 3-phosphate + phosphate + NAD(+) = (2R)-3-phospho-glyceroyl phosphate + NADH + H(+). It functions in the pathway carbohydrate biosynthesis; Calvin cycle. This chain is Glyceraldehyde-3-phosphate dehydrogenase, chloroplastic (GAPC1), found in Guillardia theta (Cryptophyte).